The primary structure comprises 455 residues: Alcohol acyl transferase 1 allele RGb (455 aa).

Residues His-164 and Asn-385 each act as proton acceptor in the active site.

It belongs to the plant acyltransferase family.

Functionally, involved in the biosynthesis of volatile esters which confer ripe apple fruit flavor. Alcohol acyl transferase that can use a wide range of alcohols as substrate to produce esters. The sequence is that of Alcohol acyl transferase 1 allele RGb from Malus domestica (Apple).